The chain runs to 300 residues: Ribosomal protein L11 methyltransferase (300 aa).

4 residues coordinate S-adenosyl-L-methionine: Thr-152, Gly-173, Asp-195, and Asn-234.

The protein belongs to the methyltransferase superfamily. PrmA family.

Its subcellular location is the cytoplasm. The catalysed reaction is L-lysyl-[protein] + 3 S-adenosyl-L-methionine = N(6),N(6),N(6)-trimethyl-L-lysyl-[protein] + 3 S-adenosyl-L-homocysteine + 3 H(+). Methylates ribosomal protein L11. The polypeptide is Ribosomal protein L11 methyltransferase (Burkholderia multivorans (strain ATCC 17616 / 249)).